A 934-amino-acid polypeptide reads, in one-letter code: MARRSVLYFILLNALINKGQACFCDHYAWTQWTSCSKTCNSGTQSRHRQIVVDKYYQENFCEQICSKQETRECNWQRCPINCLLGDFGPWSDCDPCVEKQSKVRSVLRPSQFGGQPCTEPLVAFQPCIPSKLCKIEEADCKNKFRCDSGRCIARKLECNGENDCGDNSDERDCGRTKAVCTRKYNPIPSVQLMGNGFHFLAGEPRGEVLDNSFTGGICKTVKSSRTSNPYRVPANLENVGFEVQTAEDDLKTDFYKDLTSLGHNENQQGSFSSQGGSSFSVPIFYSSKRSENINHNSAFKQAIQASHKKDSSFIRIHKVMKVLNFTTKAKDLHLSDVFLKALNHLPLEYNSALYSRIFDDFGTHYFTSGSLGGVYDLLYQFSSEELKNSGLTEEEAKHCVRIETKKRVLFVKKTKVEHRCTTNKLSEKHEGSFIQGAEKSISLIRGGRSEYAAALAWEKGSSGLEEKTFSEWLESVKENPAVIDFELAPIVDLVRNIPCAVTKRNNLRKALQEYAAKFDPCQCAPCPNNGRPTLSGTECLCVCQSGTYGENCEKQSPDYKSNAVDGHWGCWSSWSTCDATYKRSRTRECNNPVPQRGGKRCEGEKRQEEDCTFSIMENNGQPCINDDEEMKEVDLPEIEADSGCPQPVPPENGFIRNEKQLYSVGEDVEISCLTGFETVGYQYFRCLPDGTWRQGDVECQRRECIKPVVQEVLTITPFQRLYRIGESIELTCPKGFVVAGPSRYTCQGNSWTPPISNSLTCEKDTLTKLRGHCQLGQKQSGSECICMSPEEDCSHHSEDLCVFDTDSNDYFTSPACKFLAEKCLNNQQLHFLHIGSCQDGHQLEWGLERTRLSSNSTKKESCGYDTCYDWEKCSASTSKCVCLLPPQCFKGGNQLYCVKMGSSTSEKTLNICEVGTIRCANRKMEILHPGKCLA.

An N-terminal signal peptide occupies residues 1 to 21; the sequence is MARRSVLYFILLNALINKGQA. 11 disulfides stabilise this stretch: C22/C61, C24/C65, C35/C73, C39/C78, C82/C117, C93/C127, C96/C133, C140/C151, C146/C164, C158/C173, and C180/C218. TSP type-1 domains lie at 22 to 79 and 81 to 134; these read CFCD…QRCP and NCLL…KLCK. 2 C-linked (Man) tryptophan glycosylation sites follow: W29 and W32. O-linked (Fuc...) threonine glycosylation occurs at T38. A glycan (C-linked (Man) tryptophan) is linked at W90. An LDL-receptor class A domain is found at 138–175; the sequence is ADCKNKFRCDSGRCIARKLECNGENDCGDNSDERDCGR. Ca(2+)-binding residues include L156, N159, E161, D163, D169, and E170. The MACPF domain occupies 176–522; the sequence is TKAVCTRKYN…EYAAKFDPCQ (347 aa). Residues 278-290 traverse the membrane as a beta stranded segment; it reads SFSVPIFYSSKRS. N324 carries an N-linked (GlcNAc...) asparagine glycan. The O-linked (Fuc...) threonine glycan is linked to T392. Intrachain disulfides connect C399–C420, C499–C623, C521–C570, C523–C539, C526–C541, C543–C552, C577–C611, C589–C601, C644–C686, C672–C699, C704–C746, C732–C761, C773–C823, C784–C801, C786–C837, and C793–C816. Residues 402 to 415 traverse the membrane as a beta stranded segment; that stretch reads IETKKRVLFVKKTK. Residues 523–553 enclose the EGF-like domain; that stretch reads CAPCPNNGRPTLSGTECLCVCQSGTYGENCE. A TSP type-1 3 domain is found at 565–612; that stretch reads DGHWGCWSSWSTCDATYKRSRTRECNNPVPQRGGKRCEGEKRQEEDCT. Residues W568, W571, and W574 are each glycosylated (C-linked (Man) tryptophan). CCP regions lie at residues 611–688 and 689–765; these read CTFS…RCLP and DGTW…EKDT. 2 consecutive Sushi domains span residues 642–701 and 702–763; these read SGCP…ECQR and RECI…TCEK. The C5b-binding domain stretch occupies residues 642-934; it reads SGCPQPVPPE…EILHPGKCLA (293 aa). Residues 766–840 are factor I module (FIM) 1; that stretch reads LTKLRGHCQL…FLHIGSCQDG (75 aa). Residues 780–839 form the Kazal-like 1 domain; it reads SGSECICMSPEEDCSHHSEDLCVFDTDSNDYFTSPACKFLAEKCLNNQQLHFLHIGSCQD. N855 carries N-linked (GlcNAc...) asparagine glycosylation. A factor I module (FIM) 2 region spans residues 858 to 934; the sequence is KKESCGYDTC…EILHPGKCLA (77 aa). 5 disulfides stabilise this stretch: C862-C873, C867-C919, C880-C897, C882-C932, and C888-C912. Residues 876-934 form the Kazal-like 2 domain; that stretch reads STSKCVCLLPPQCFKGGNQLYCVKMGSSTSEKTLNICEVGTIRCANRKMEILHPGKCLA.

Belongs to the complement C6/C7/C8/C9 family. Component of the membrane attack complex (MAC), composed of complement C5b, C6, C7, C8A, C8B, C8G and multiple copies of the pore-forming subunit C9. Post-translationally, all cysteine residues are assumed to be cross-linked to one another. Individual modules containing an even number of conserved cysteine residues are supposed to have disulfide linkages only within the same module.

The protein resides in the secreted. Its subcellular location is the target cell membrane. Membrane attack complex (MAC) assembly is inhibited by CD59, thereby protecting self-cells from damage during complement activation. MAC assembly is also inhibited by clusterin (CLU) chaperones that inhibit polymerization of C9. Functionally, component of the membrane attack complex (MAC), a multiprotein complex activated by the complement cascade, which inserts into a target cell membrane and forms a pore, leading to target cell membrane rupture and cell lysis. The MAC is initiated by proteolytic cleavage of C5 into complement C5b in response to the classical, alternative, lectin and GZMK complement pathways. The complement pathways consist in a cascade of proteins that leads to phagocytosis and breakdown of pathogens and signaling that strengthens the adaptive immune system. Together with component C5b, involved in MAC complex assembly: complement C5b and C6 associate with the outer leaflet of target cell membrane, reducing the energy for membrane bending. The sequence is that of Complement component C6 (C6) from Pan troglodytes (Chimpanzee).